The sequence spans 146 residues: Large ribosomal subunit protein uL15 (146 aa).

The segment at 1-51 (MQLNTLKPAEGSKKNRRRVGRGIGSGLGKTAGRGHKGQKSRSGGFHKVGFE) is disordered. Gly residues predominate over residues 21 to 31 (RGIGSGLGKTA).

It belongs to the universal ribosomal protein uL15 family. In terms of assembly, part of the 50S ribosomal subunit.

In terms of biological role, binds to the 23S rRNA. The chain is Large ribosomal subunit protein uL15 from Polynucleobacter asymbioticus (strain DSM 18221 / CIP 109841 / QLW-P1DMWA-1) (Polynucleobacter necessarius subsp. asymbioticus).